Consider the following 163-residue polypeptide: Photosystem II extrinsic protein V (163 aa).

An N-terminal signal peptide occupies residues 1-26 (MFRRLIGVVVATALLTFQLIVGSATA). The heme c site is built by cysteine 63, cysteine 66, histidine 67, and histidine 118.

The protein belongs to the cytochrome c family. PsbV subfamily. In terms of assembly, PSII is composed of 1 copy each of membrane proteins PsbA, PsbB, PsbC, PsbD, PsbE, PsbF, PsbH, PsbI, PsbJ, PsbK, PsbL, PsbM, PsbT, PsbX, PsbY, PsbZ, Psb30/Ycf12, peripheral proteins PsbO, CyanoQ (PsbQ), PsbU, PsbV and a large number of cofactors. It forms dimeric complexes. Requires heme c as cofactor.

It localises to the cellular thylakoid membrane. One of the extrinsic, lumenal subunits of photosystem II (PSII). PSII is a light-driven water plastoquinone oxidoreductase, using light energy to abstract electrons from H(2)O, generating a proton gradient subsequently used for ATP formation. The extrinsic proteins stabilize the structure of photosystem II oxygen-evolving complex (OEC), the ion environment of oxygen evolution and protect the OEC against heat-induced inactivation. Low-potential cytochrome c that plays a role in the OEC of PSII. The sequence is that of Photosystem II extrinsic protein V from Nostoc sp. (strain PCC 7120 / SAG 25.82 / UTEX 2576).